A 472-amino-acid polypeptide reads, in one-letter code: SURF6 homolog gldi-11 (472 aa).

Disordered stretches follow at residues L53–L73, K89–I232, K249–L350, and L414–L472. Over residues K95–K106 the composition is skewed to low complexity. A compositionally biased stretch (basic and acidic residues) spans R107–S132. Positions D133–E150 are enriched in acidic residues. Residues P151–E160 show a composition bias toward basic and acidic residues. 2 stretches are compositionally biased toward acidic residues: residues S161–E175 and E182–E194. Residues S197–S210 are compositionally biased toward polar residues. Basic and acidic residues predominate over residues G212–L221. A compositionally biased stretch (basic residues) spans L274 to Q285. The segment covering R286–V305 has biased composition (basic and acidic residues). The segment covering L414 to Q426 has biased composition (basic residues). Residues K427–Q443 are compositionally biased toward basic and acidic residues. Residues K459–L472 are compositionally biased toward basic residues.

The protein belongs to the SURF6 family.

The protein resides in the nucleus. It localises to the nucleoplasm. Its function is as follows. Binds to both DNA and RNA in vitro, with a stronger binding capacity for RNA. May represent a nucleolar constitutive protein involved in ribosomal biosynthesis or assembly. The chain is SURF6 homolog gldi-11 from Caenorhabditis elegans.